We begin with the raw amino-acid sequence, 538 residues long: MFFLYTDFFLSLVAVPAAAPVCQPKSATNGQPPAPAPTPTPRLSISSRATVVARMEGTSQGGLQTVMKWKTVVAIFVVVVVYLVTGGLVFRALEQPFESSQKNTIALEKAEFLRDHVCVSPQELETLIQHALDADNAGVSPIGNSSNNSSHWDLGSAFFFAGTVITTIGYGNIAPSTEGGKIFCILYAIFGIPLFGFLLAGIGDQLGTIFGKSIARVEKVFRKKQVSQTKIRVISTILFILAGCIVFVTIPAVIFKYIEGWTALESIYFVVVTLTTVGFGDFVAGGNAGINYREWYKPLVWFWILVGLAYFAAVLSMIGDWLRVLSKKTKEEVGEIKAHAAEWKANVTAEFRETRRRLSVEIHDKLQRAATIRSMERRRLGLDQRAHSLDMLSPEKRSVFAALDTGRFKASSQESINNRPNNLRLKGPEQLNKHGQGASEDNIINKFGSTSRLTKRKNKDLKKTLPEDVQKIYKTFRNYSLDEEKKEEETEKMCNSDNSSTAMLTDCIQQHAELENGMIPTDTKDREPENNSLLEDRN.

The Cytoplasmic segment spans residues 1 to 71 (MFFLYTDFFL…GLQTVMKWKT (71 aa)). The chain crosses the membrane as a helical span at residues 72-92 (VVAIFVVVVVYLVTGGLVFRA). N-linked (GlcNAc...) asparagine glycans are attached at residues N144, N147, and N148. The pore-forming intramembrane region spans 154-180 (LGSAFFFAGTVITTIGYGNIAPSTEGG). K(+) contacts are provided by T167, I168, G169, and Y170. A selectivity filter 1 region spans residues 167–172 (TIGYGN). A helical transmembrane segment spans residues 182–202 (IFCILYAIFGIPLFGFLLAGI). At 203-233 (GDQLGTIFGKSIARVEKVFRKKQVSQTKIRV) the chain is on the cytoplasmic side. Residues 234-254 (ISTILFILAGCIVFVTIPAVI) traverse the membrane as a helical segment. Residues 263–294 (ALESIYFVVVTLTTVGFGDFVAGGNAGINYRE) constitute an intramembrane region (pore-forming). 4 residues coordinate K(+): T276, V277, G278, and F279. The segment at 276 to 281 (TVGFGD) is selectivity filter 2. Residues 299–319 (LVWFWILVGLAYFAAVLSMIG) form a helical membrane-spanning segment. Topologically, residues 320–538 (DWLRVLSKKT…ENNSLLEDRN (219 aa)) are cytoplasmic. Positions 412 to 421 (SQESINNRPN) are enriched in polar residues. Disordered regions lie at residues 412–443 (SQES…EDNI) and 510–538 (QHAE…EDRN). Positions 522 to 538 (DTKDREPENNSLLEDRN) are enriched in basic and acidic residues.

This sequence belongs to the two pore domain potassium channel (TC 1.A.1.8) family. As to quaternary structure, homodimer; disulfide-linked. Forms heterodimers with other 2-pore domain K(+) channel subunits, such as KCNK2, KCNK4 and KCNK18. As to expression, abundantly expressed in pancreas and kidney and to a lower level in brain, testis, colon, and small intestine. In brain, mainly expressed in cerebellum, occipital lobe, putamen, and thalamus. No expression is detected in amygdala and spinal cord. Strongly expressed in kidney (primarily in the proximal tubule) and pancreas. In terms of tissue distribution, abundantly expressed in brain.

The protein resides in the cell membrane. The catalysed reaction is K(+)(in) = K(+)(out). It catalyses the reaction Rb(+)(in) = Rb(+)(out). It carries out the reaction Cs(+)(in) = Cs(+)(out). Activated by various stimuli including acidic pH, anesthetics chloroform, halothane and isoflurane, mechanical stretch, lipids such as arachidonic, docosahexaenoic and linoleic polyunsaturated fatty acids and lysophosphatidylcholine and lysophosphatidylinositol lysophospholipids. Inhibited by norfluoxetine, the active metabolite of antidepressant fluoxetine (Prozac). Its function is as follows. K(+) channel that conducts voltage-dependent outward rectifying currents upon membrane depolarization. Voltage sensing is coupled to K(+) electrochemical gradient in an 'ion flux gating' mode where outward but not inward ion flow opens the gate. Converts to voltage-independent 'leak' conductance mode upon stimulation by various stimuli including mechanical membrane stretch, acidic pH, heat and lipids. Homo- and heterodimerizes to form functional channels with distinct regulatory and gating properties. In trigeminal ganglia sensory neurons, the heterodimer of KCNK10/TREK-2 and KCNK18/TRESK inhibits neuronal firing and neurogenic inflammation by stabilizing the resting membrane potential at K(+) equilibrium potential as well as by regulating the threshold of action potentials and the spike frequency. Permeable to other monovalent ions such as Rb(+) and Cs(+). The protein is Potassium channel subfamily K member 10 of Homo sapiens (Human).